Here is a 77-residue protein sequence, read N- to C-terminus: Putative defensin-like protein 160 (77 aa).

The first 24 residues, 1–24, serve as a signal peptide directing secretion; that stretch reads MAKLSCSYFFILMLVFSALLMVEC. 4 disulfides stabilise this stretch: Cys-30-Cys-77, Cys-40-Cys-59, Cys-45-Cys-71, and Cys-49-Cys-73.

This sequence belongs to the DEFL family.

Its subcellular location is the secreted. The protein is Putative defensin-like protein 160 (LCR26) of Arabidopsis thaliana (Mouse-ear cress).